Consider the following 335-residue polypeptide: Glutamyl-tRNA reductase (335 aa).

Residues 60–63 (TCHR), S110, 115–117 (ETE), and Q121 contribute to the substrate site. C61 acts as the Nucleophile in catalysis. 189–194 (GYSEIN) is a binding site for NADP(+).

Belongs to the glutamyl-tRNA reductase family. As to quaternary structure, homodimer.

The catalysed reaction is (S)-4-amino-5-oxopentanoate + tRNA(Glu) + NADP(+) = L-glutamyl-tRNA(Glu) + NADPH + H(+). The protein operates within porphyrin-containing compound metabolism; protoporphyrin-IX biosynthesis; 5-aminolevulinate from L-glutamyl-tRNA(Glu): step 1/2. Functionally, catalyzes the NADPH-dependent reduction of glutamyl-tRNA(Glu) to glutamate 1-semialdehyde (GSA). This chain is Glutamyl-tRNA reductase, found in Chlamydia trachomatis serovar A (strain ATCC VR-571B / DSM 19440 / HAR-13).